Reading from the N-terminus, the 240-residue chain is Biosynthetic peptidoglycan transglycosylase (240 aa).

The chain crosses the membrane as a helical span at residues 15–35; it reads WMVYLGAVVAIAWLATQAFYF.

Belongs to the glycosyltransferase 51 family.

It localises to the cell inner membrane. The catalysed reaction is [GlcNAc-(1-&gt;4)-Mur2Ac(oyl-L-Ala-gamma-D-Glu-L-Lys-D-Ala-D-Ala)](n)-di-trans,octa-cis-undecaprenyl diphosphate + beta-D-GlcNAc-(1-&gt;4)-Mur2Ac(oyl-L-Ala-gamma-D-Glu-L-Lys-D-Ala-D-Ala)-di-trans,octa-cis-undecaprenyl diphosphate = [GlcNAc-(1-&gt;4)-Mur2Ac(oyl-L-Ala-gamma-D-Glu-L-Lys-D-Ala-D-Ala)](n+1)-di-trans,octa-cis-undecaprenyl diphosphate + di-trans,octa-cis-undecaprenyl diphosphate + H(+). Its pathway is cell wall biogenesis; peptidoglycan biosynthesis. Functionally, peptidoglycan polymerase that catalyzes glycan chain elongation from lipid-linked precursors. This is Biosynthetic peptidoglycan transglycosylase from Paraburkholderia phytofirmans (strain DSM 17436 / LMG 22146 / PsJN) (Burkholderia phytofirmans).